A 216-amino-acid polypeptide reads, in one-letter code: Soluble inorganic pyrophosphatase 3 (216 aa).

Residues 1-10 (MSEEAYEETQ) are compositionally biased toward acidic residues. Residues 1-21 (MSEEAYEETQESSQSPRPVPK) form a disordered region. Lys-66 and Arg-80 together coordinate substrate. Tyr-88 (proton donor) is an active-site residue. Tyr-92 serves as a coordination point for substrate. The Mg(2+) site is built by Asp-102, Asp-107, and Asp-139. Tyr-176 is a binding site for substrate.

This sequence belongs to the PPase family. The cofactor is Mg(2+). In terms of tissue distribution, expressed preferentially in stamen, pollen and flower, and at a low level in lateral roots and root elongation zones.

It localises to the cytoplasm. The enzyme catalyses diphosphate + H2O = 2 phosphate + H(+). The protein is Soluble inorganic pyrophosphatase 3 of Arabidopsis thaliana (Mouse-ear cress).